The primary structure comprises 395 residues: Small ribosomal subunit protein mS31 (395 aa).

The transit peptide at 1–65 (MFPRVSTFLP…IQRYFGTNSV (65 aa)) directs the protein to the mitochondrion. Disordered regions lie at residues 70–97 (KDKQ…NTKK) and 175–196 (SELL…DAKR). Over residues 183–196 (QHEEESRAQRDAKR) the composition is skewed to basic and acidic residues.

Belongs to the mitochondrion-specific ribosomal protein mS31 family. In terms of assembly, component of the mitochondrial small ribosomal subunit (mt-SSU). Mature mammalian 55S mitochondrial ribosomes consist of a small (28S) and a large (39S) subunit. The 28S small subunit contains a 12S ribosomal RNA (12S mt-rRNA) and 30 different proteins. The 39S large subunit contains a 16S rRNA (16S mt-rRNA), a copy of mitochondrial valine transfer RNA (mt-tRNA(Val)), which plays an integral structural role, and 52 different proteins.

It localises to the mitochondrion. The polypeptide is Small ribosomal subunit protein mS31 (MRPS31) (Homo sapiens (Human)).